Consider the following 354-residue polypeptide: Protein CbrA (354 aa).

Belongs to the CbrA family.

In Escherichia coli (strain K12), this protein is Protein CbrA (cbrA).